We begin with the raw amino-acid sequence, 261 residues long: Cytochrome c oxidase subunit 3 (261 aa).

The Mitochondrial matrix segment spans residues 1-15 (MTHQTHAYHMVNPSP). The helical transmembrane segment at 16–34 (WPLTGALSALLMTSGLAMW) threads the bilayer. The Mitochondrial intermembrane segment spans residues 35–40 (FHFNSV). The chain crosses the membrane as a helical span at residues 41–66 (TLLTLGLTTNMLTMYQWWRDIIREST). Residues 67–72 (FQGHHT) lie on the Mitochondrial matrix side of the membrane. Residues 73 to 105 (PTVQKGLRYGMILFIISEVLFFTGFFWAFYHSS) form a helical membrane-spanning segment. Residues 106-128 (LAPTPELGGCWPPTGISPLNPLE) are Mitochondrial intermembrane-facing. Residues 129–152 (VPLLNTSVLLASGVSITWAHHSLM) form a helical membrane-spanning segment. The Mitochondrial matrix segment spans residues 153–155 (EGN). A helical membrane pass occupies residues 156–183 (RNHMLQALFITIALGVYFTLLQASEYYE). Residues 184–190 (APFTISD) are Mitochondrial intermembrane-facing. A helical transmembrane segment spans residues 191-223 (GIYGSTFFVATGFHGLHVIIGSTFLIVCFFRQL). Topologically, residues 224–232 (KFHFTSNHH) are mitochondrial matrix. The helical transmembrane segment at 233–256 (FGFEAAAWYWHFVDVVWLFLYVSI) threads the bilayer. Topologically, residues 257–261 (YWWGS) are mitochondrial intermembrane.

Belongs to the cytochrome c oxidase subunit 3 family. As to quaternary structure, component of the cytochrome c oxidase (complex IV, CIV), a multisubunit enzyme composed of 14 subunits. The complex is composed of a catalytic core of 3 subunits MT-CO1, MT-CO2 and MT-CO3, encoded in the mitochondrial DNA, and 11 supernumerary subunits COX4I, COX5A, COX5B, COX6A, COX6B, COX6C, COX7A, COX7B, COX7C, COX8 and NDUFA4, which are encoded in the nuclear genome. The complex exists as a monomer or a dimer and forms supercomplexes (SCs) in the inner mitochondrial membrane with NADH-ubiquinone oxidoreductase (complex I, CI) and ubiquinol-cytochrome c oxidoreductase (cytochrome b-c1 complex, complex III, CIII), resulting in different assemblies (supercomplex SCI(1)III(2)IV(1) and megacomplex MCI(2)III(2)IV(2)).

Its subcellular location is the mitochondrion inner membrane. It catalyses the reaction 4 Fe(II)-[cytochrome c] + O2 + 8 H(+)(in) = 4 Fe(III)-[cytochrome c] + 2 H2O + 4 H(+)(out). Component of the cytochrome c oxidase, the last enzyme in the mitochondrial electron transport chain which drives oxidative phosphorylation. The respiratory chain contains 3 multisubunit complexes succinate dehydrogenase (complex II, CII), ubiquinol-cytochrome c oxidoreductase (cytochrome b-c1 complex, complex III, CIII) and cytochrome c oxidase (complex IV, CIV), that cooperate to transfer electrons derived from NADH and succinate to molecular oxygen, creating an electrochemical gradient over the inner membrane that drives transmembrane transport and the ATP synthase. Cytochrome c oxidase is the component of the respiratory chain that catalyzes the reduction of oxygen to water. Electrons originating from reduced cytochrome c in the intermembrane space (IMS) are transferred via the dinuclear copper A center (CU(A)) of subunit 2 and heme A of subunit 1 to the active site in subunit 1, a binuclear center (BNC) formed by heme A3 and copper B (CU(B)). The BNC reduces molecular oxygen to 2 water molecules using 4 electrons from cytochrome c in the IMS and 4 protons from the mitochondrial matrix. The polypeptide is Cytochrome c oxidase subunit 3 (MT-CO3) (Neotragus moschatus (Suni)).